The primary structure comprises 36 residues: Photosystem I reaction center subunit VIII (36 aa).

A helical membrane pass occupies residues 8 to 28; it reads SFFVPLVCLVFPAIAMAFLFV.

Belongs to the PsaI family.

It localises to the plastid. It is found in the chloroplast thylakoid membrane. Functionally, may help in the organization of the PsaL subunit. The polypeptide is Photosystem I reaction center subunit VIII (Chara vulgaris (Common stonewort)).